A 254-amino-acid chain; its full sequence is PF03932 family protein CutC (254 aa).

Belongs to the CutC family.

It is found in the cytoplasm. This is PF03932 family protein CutC from Yersinia pseudotuberculosis serotype I (strain IP32953).